The chain runs to 266 residues: Receptor-recognizing protein gp38 (266 aa).

Short sequence motifs (GRM) lie at residues 116-123 (GRGGNGGY), 126-137 (SGGDGNGTQGGH), 157-171 (AGGGGGGGIAYRPHS), 174-184 (KWQDIGGGGGR), 187-191 (GGAGG), 194-200 (YSGGAAS), 202-209 (EGPGGGYD), 214-220 (HSGAGGN), 223-228 (AAGQNA), and 232-246 (GGKVLKVGVGGASGH).

The protein belongs to the receptor-recognizing protein gp38 family.

It localises to the virion. Functionally, receptor binding protein (RBP) that is at the tip of the long tail fibers and serves as the phage recognition site for the attachment host receptor. Probably uses the host receptor OmpA. This chain is Receptor-recognizing protein gp38 (38), found in Enterobacteria phage Ox2 (Bacteriophage Ox2).